The following is a 122-amino-acid chain: Small ribosomal subunit protein uS13 (122 aa).

Basic residues predominate over residues 95–116 (GLPVRGQKTKTNARTRKGRRKT). The disordered stretch occupies residues 95-122 (GLPVRGQKTKTNARTRKGRRKTVGAATK).

It belongs to the universal ribosomal protein uS13 family. In terms of assembly, part of the 30S ribosomal subunit. Forms a loose heterodimer with protein S19. Forms two bridges to the 50S subunit in the 70S ribosome.

Functionally, located at the top of the head of the 30S subunit, it contacts several helices of the 16S rRNA. In the 70S ribosome it contacts the 23S rRNA (bridge B1a) and protein L5 of the 50S subunit (bridge B1b), connecting the 2 subunits; these bridges are implicated in subunit movement. Contacts the tRNAs in the A and P-sites. This is Small ribosomal subunit protein uS13 from Campylobacter curvus (strain 525.92).